Here is a 385-residue protein sequence, read N- to C-terminus: Leucine aminopeptidase 1 (385 aa).

The first 14 residues, 1–14 (MKFLTLALSATATA), serve as a signal peptide directing secretion. Residues 15–85 (MIIVNPEQQP…YGTLHTTRVV (71 aa)) constitute a propeptide that is removed on maturation. 4 residues coordinate Zn(2+): His185, Asp204, Glu243, and Asp270. A disulfide bond links Cys319 and Cys323. His352 is a binding site for Zn(2+).

It belongs to the peptidase M28 family. M28E subfamily. Monomer. It depends on Zn(2+) as a cofactor.

The protein localises to the secreted. Its function is as follows. Extracellular aminopeptidase that allows assimilation of proteinaceous substrates. The chain is Leucine aminopeptidase 1 (lap1) from Penicillium rubens (strain ATCC 28089 / DSM 1075 / NRRL 1951 / Wisconsin 54-1255) (Penicillium chrysogenum).